Consider the following 362-residue polypeptide: Aspartate carbamoyltransferase catalytic subunit (362 aa).

The interval 1–22 (MPKTAMTDSTSKTSTNTASSDM) is disordered. Residues 7–20 (TDSTSKTSTNTASS) show a composition bias toward low complexity. Arginine 100 and threonine 101 together coordinate carbamoyl phosphate. Lysine 128 contributes to the L-aspartate binding site. Carbamoyl phosphate contacts are provided by arginine 150, histidine 180, and glutamine 183. L-aspartate is bound by residues arginine 214 and arginine 269. Residues glycine 310 and proline 311 each coordinate carbamoyl phosphate.

The protein belongs to the aspartate/ornithine carbamoyltransferase superfamily. ATCase family. Heterododecamer (2C3:3R2) of six catalytic PyrB chains organized as two trimers (C3), and six regulatory PyrI chains organized as three dimers (R2).

The catalysed reaction is carbamoyl phosphate + L-aspartate = N-carbamoyl-L-aspartate + phosphate + H(+). The protein operates within pyrimidine metabolism; UMP biosynthesis via de novo pathway; (S)-dihydroorotate from bicarbonate: step 2/3. Its function is as follows. Catalyzes the condensation of carbamoyl phosphate and aspartate to form carbamoyl aspartate and inorganic phosphate, the committed step in the de novo pyrimidine nucleotide biosynthesis pathway. The protein is Aspartate carbamoyltransferase catalytic subunit of Psychrobacter sp. (strain PRwf-1).